The sequence spans 155 residues: MSEQNNTEMAFQIQRIYTKDVSFEAPNAPHVFQKDWQPEVKLDLDTASTQLADDVYEVVLRVTVTASLGEETAFLCEVQQGGIFSISGIEGTQMAHCLGAYCPNILFPYARECITSLVSRGTFPQLNLAPVNFDALFMNYLQQQAGEGTEEHQDA.

It belongs to the SecB family. Homotetramer, a dimer of dimers. One homotetramer interacts with 1 SecA dimer.

It is found in the cytoplasm. Its function is as follows. One of the proteins required for the normal export of preproteins out of the cell cytoplasm. It is a molecular chaperone that binds to a subset of precursor proteins, maintaining them in a translocation-competent state. It also specifically binds to its receptor SecA. The polypeptide is Protein-export protein SecB (Citrobacter koseri (strain ATCC BAA-895 / CDC 4225-83 / SGSC4696)).